The chain runs to 120 residues: MDYEFLRDITGGVKVRMSMGHEVVGHWFNEEVKENLALLDEVEQAARTIKGSERSWQRIGHEYTLWMDGEEVMVRANQMEISGDEMEEGMSYYDEESFSLCGVEDFLQVVKAYREFMQQK.

This sequence belongs to the UPF0231 family.

The polypeptide is UPF0231 protein Ent638_0667 (Enterobacter sp. (strain 638)).